We begin with the raw amino-acid sequence, 448 residues long: Phosphoglucosamine mutase (448 aa).

The active-site Phosphoserine intermediate is the serine 99. Residues serine 99, aspartate 238, aspartate 240, and aspartate 242 each coordinate Mg(2+). Residue serine 99 is modified to Phosphoserine.

This sequence belongs to the phosphohexose mutase family. Requires Mg(2+) as cofactor. Post-translationally, activated by phosphorylation.

The enzyme catalyses alpha-D-glucosamine 1-phosphate = D-glucosamine 6-phosphate. Catalyzes the conversion of glucosamine-6-phosphate to glucosamine-1-phosphate. This is Phosphoglucosamine mutase from Marinomonas sp. (strain MWYL1).